Here is a 205-residue protein sequence, read N- to C-terminus: NADH-ubiquinone oxidoreductase chain 6 (205 aa).

Helical transmembrane passes span 48–68 (FFAM…FLFV), 86–106 (YLPV…FILD), and 150–170 (VWFL…IVLT).

Belongs to the complex I subunit 6 family. Complex I is composed of about 45 different subunits.

It localises to the mitochondrion membrane. The catalysed reaction is a ubiquinone + NADH + 5 H(+)(in) = a ubiquinol + NAD(+) + 4 H(+)(out). Its function is as follows. Core subunit of the mitochondrial membrane respiratory chain NADH dehydrogenase (Complex I) that is believed to belong to the minimal assembly required for catalysis. Complex I functions in the transfer of electrons from NADH to the respiratory chain. The immediate electron acceptor for the enzyme is believed to be ubiquinone. The protein is NADH-ubiquinone oxidoreductase chain 6 (ND6) of Brassica campestris (Field mustard).